We begin with the raw amino-acid sequence, 408 residues long: Neutral cholesterol ester hydrolase 1 (408 aa).

Residues 1–4 lie on the Cytoplasmic side of the membrane; the sequence is MRSS. Residues 5–25 form a helical; Signal-anchor for type II membrane protein membrane-spanning segment; the sequence is CVLLAALLALAAYYVYIPLPS. Residues 26–408 are Lumenal-facing; it reads AVSDPWKLML…SYIKWLDQNL (383 aa). The short motif at 113–115 is the Involved in the stabilization of the negatively charged intermediate by the formation of the oxyanion hole element; sequence HGG. Residue Ser191 is part of the active site. Residue Asn270 is glycosylated (N-linked (GlcNAc...) asparagine). Residue Asp348 is part of the active site. A glycan (N-linked (GlcNAc...) asparagine) is linked at Asn367. The active site involves His378. The N-linked (GlcNAc...) asparagine glycan is linked to Asn389.

It belongs to the 'GDXG' lipolytic enzyme family. In terms of processing, N-glycosylated. Present in brain, heart, kidney, lung, spinal cord and testis but not liver (at protein level). Expressed in peritoneal macrophages and kidney.

It is found in the cell membrane. The protein localises to the microsome. It carries out the reaction a 1-O-alkyl-2-acetyl-sn-glycerol + H2O = a 1-O-alkyl-sn-glycerol + acetate + H(+). The catalysed reaction is 1-O-hexadecyl-2-acetyl-sn-glycerol + H2O = 1-O-hexadecyl-sn-glycerol + acetate + H(+). It catalyses the reaction a cholesterol ester + H2O = cholesterol + a fatty acid + H(+). The enzyme catalyses cholesteryl (9Z-octadecenoate) + H2O = cholesterol + (9Z)-octadecenoate + H(+). Inhibited by bulky trifluoromethyl ketones. Hydrolyzes 2-acetyl monoalkylglycerol ether (1-O-alkyl-2-acetyl-sn-glycerol), the penultimate precursor of the pathway for de novo synthesis of platelet-activating factor. May be responsible for the hydrolysis of cholesterol esters (such as cholesteryl (9Z-octadecenoate)) in macrophages. Also involved in organ detoxification by hydrolyzing exogenous organophosphorus compounds. In Mus musculus (Mouse), this protein is Neutral cholesterol ester hydrolase 1 (Nceh1).